The primary structure comprises 131 residues: D-ribose pyranase (131 aa).

The active-site Proton donor is His20. Substrate is bound by residues Asp28, His98, and Tyr120–Asn122.

This sequence belongs to the RbsD / FucU family. RbsD subfamily. In terms of assembly, homodecamer.

Its subcellular location is the cytoplasm. The catalysed reaction is beta-D-ribopyranose = beta-D-ribofuranose. The protein operates within carbohydrate metabolism; D-ribose degradation; D-ribose 5-phosphate from beta-D-ribopyranose: step 1/2. Functionally, catalyzes the interconversion of beta-pyran and beta-furan forms of D-ribose. The chain is D-ribose pyranase from Symbiobacterium thermophilum (strain DSM 24528 / JCM 14929 / IAM 14863 / T).